Consider the following 312-residue polypeptide: Probable HTH-type transcriptional regulator LrhA (312 aa).

The HTH lysR-type domain maps to 11-68 (LDLDLLRTFVAVADLNTFAAAAAAVCRTQSAVSQQMQRLEQLVGKELFARHGRNKLLT). Positions 28–47 (FAAAAAAVCRTQSAVSQQMQ) form a DNA-binding region, H-T-H motif.

It belongs to the LysR transcriptional regulatory family.

Functionally, not known, does not seem to act on the proton translocating NADH dehydrogenase genes (nuoA-N) which are part of the lrhA operon. In Escherichia coli (strain K12), this protein is Probable HTH-type transcriptional regulator LrhA (lrhA).